Here is a 400-residue protein sequence, read N- to C-terminus: CCA-adding enzyme (400 aa).

Residues glycine 28 and arginine 31 each contribute to the ATP site. CTP-binding residues include glycine 28 and arginine 31. Residues aspartate 41 and aspartate 43 each coordinate Mg(2+). Positions 112, 155, 158, 161, and 164 each coordinate ATP. CTP-binding residues include arginine 112, aspartate 155, arginine 158, arginine 161, and arginine 164.

Belongs to the tRNA nucleotidyltransferase/poly(A) polymerase family. Bacterial CCA-adding enzyme type 3 subfamily. Homodimer. Mg(2+) serves as cofactor.

It catalyses the reaction a tRNA precursor + 2 CTP + ATP = a tRNA with a 3' CCA end + 3 diphosphate. The catalysed reaction is a tRNA with a 3' CCA end + 2 CTP + ATP = a tRNA with a 3' CCACCA end + 3 diphosphate. Its function is as follows. Catalyzes the addition and repair of the essential 3'-terminal CCA sequence in tRNAs without using a nucleic acid template. Adds these three nucleotides in the order of C, C, and A to the tRNA nucleotide-73, using CTP and ATP as substrates and producing inorganic pyrophosphate. tRNA 3'-terminal CCA addition is required both for tRNA processing and repair. Also involved in tRNA surveillance by mediating tandem CCA addition to generate a CCACCA at the 3' terminus of unstable tRNAs. While stable tRNAs receive only 3'-terminal CCA, unstable tRNAs are marked with CCACCA and rapidly degraded. The sequence is that of CCA-adding enzyme from Staphylococcus aureus (strain MRSA252).